The following is a 145-amino-acid chain: Allergen MAG29 (145 aa).

Disordered regions lie at residues 1 to 21 (KDDIERMVKEAESYKEEDDKQ) and 103 to 145 (AGGA…EEVD). The segment covering 104–137 (GGAGAGGMPGGFPGGFPGTDGSGGGAAGGDGGKS) has biased composition (gly residues).

It belongs to the heat shock protein 70 family.

This chain is Allergen MAG29 (MAG29), found in Dermatophagoides farinae (American house dust mite).